A 48-amino-acid polypeptide reads, in one-letter code: Large ribosomal subunit protein eL40 (48 aa).

This sequence belongs to the eukaryotic ribosomal protein eL40 family.

The protein is Large ribosomal subunit protein eL40 of Methanobrevibacter smithii (strain ATCC 35061 / DSM 861 / OCM 144 / PS).